A 443-amino-acid chain; its full sequence is 23S rRNA (uracil(1939)-C(5))-methyltransferase RlmD (443 aa).

The region spanning 10-68 (RVTTKQTLTVTVNSLDPFGQGVAHHQGKAIFIPGALPGEQAEIELTEQKRQYSRGKLKR) is the TRAM domain. [4Fe-4S] cluster contacts are provided by cysteine 81, cysteine 87, cysteine 90, and cysteine 168. The S-adenosyl-L-methionine site is built by glutamine 271, phenylalanine 300, asparagine 305, glutamate 321, asparagine 348, and aspartate 369. Cysteine 395 functions as the Nucleophile in the catalytic mechanism.

The protein belongs to the class I-like SAM-binding methyltransferase superfamily. RNA M5U methyltransferase family. RlmD subfamily.

It carries out the reaction uridine(1939) in 23S rRNA + S-adenosyl-L-methionine = 5-methyluridine(1939) in 23S rRNA + S-adenosyl-L-homocysteine + H(+). In terms of biological role, catalyzes the formation of 5-methyl-uridine at position 1939 (m5U1939) in 23S rRNA. The protein is 23S rRNA (uracil(1939)-C(5))-methyltransferase RlmD of Yersinia enterocolitica serotype O:8 / biotype 1B (strain NCTC 13174 / 8081).